The following is a 582-amino-acid chain: Myoneurin (582 aa).

A BTB domain is found at 24–89; the sequence is CDCTIVIGEF…IYTGTLNLDS (66 aa). Residues 169–197 are disordered; the sequence is QGALAKKSSQTKKKKKAFNSPKTGQNKTV. Short sequence motifs (nuclear localization signal) lie at residues 174–190 and 257–262; these read KKSS…NSPK and KRKRGK. The span at 188 to 197 shows a compositional bias: polar residues; the sequence is SPKTGQNKTV. Ser-289 bears the Phosphoserine mark. Residues 302–324 form a C2H2-type 1; degenerate zinc finger; that stretch reads PMCNTRGKVFSEASSLRRHMRIH. 6 consecutive C2H2-type zinc fingers follow at residues 330-352, 358-381, 387-409, 415-437, 443-465, and 471-494; these read YVCH…VRTH, YKCE…RMHH, YKCD…ARKH, YVCD…VRRH, YVCD…SRKH, and FICE…TKVH. The interval 489–538 is disordered; that stretch reads HKTKVHSGADKTPDSSAEDHTLSEQDSIQKSPLSETMDVKPSDTTLPLAL. The segment covering 495-511 has biased composition (basic and acidic residues); the sequence is SGADKTPDSSAEDHTLS. Positions 512–522 are enriched in polar residues; sequence EQDSIQKSPLS.

Belongs to the krueppel C2H2-type zinc-finger protein family.

It localises to the nucleus. The protein is Myoneurin (MYNN) of Pongo abelii (Sumatran orangutan).